Consider the following 334-residue polypeptide: Fructose-1,6-bisphosphatase class 1 2 (334 aa).

Positions 92, 114, 116, and 117 each coordinate Mg(2+). Substrate contacts are provided by residues aspartate 117–serine 120, asparagine 208, and lysine 274. Glutamate 280 contacts Mg(2+).

Belongs to the FBPase class 1 family. In terms of assembly, homotetramer. It depends on Mg(2+) as a cofactor.

The protein resides in the cytoplasm. The enzyme catalyses beta-D-fructose 1,6-bisphosphate + H2O = beta-D-fructose 6-phosphate + phosphate. Its pathway is carbohydrate biosynthesis; gluconeogenesis. The protein is Fructose-1,6-bisphosphatase class 1 2 of Albidiferax ferrireducens (strain ATCC BAA-621 / DSM 15236 / T118) (Rhodoferax ferrireducens).